A 363-amino-acid polypeptide reads, in one-letter code: Chorismate synthase (363 aa).

Arg47 is an NADP(+) binding site. FMN contacts are provided by residues 124–126 (RSS), Gly285, 300–304 (KPTAT), and Arg326.

It belongs to the chorismate synthase family. In terms of assembly, homotetramer. The cofactor is FMNH2.

The catalysed reaction is 5-O-(1-carboxyvinyl)-3-phosphoshikimate = chorismate + phosphate. It participates in metabolic intermediate biosynthesis; chorismate biosynthesis; chorismate from D-erythrose 4-phosphate and phosphoenolpyruvate: step 7/7. Functionally, catalyzes the anti-1,4-elimination of the C-3 phosphate and the C-6 proR hydrogen from 5-enolpyruvylshikimate-3-phosphate (EPSP) to yield chorismate, which is the branch point compound that serves as the starting substrate for the three terminal pathways of aromatic amino acid biosynthesis. This reaction introduces a second double bond into the aromatic ring system. The protein is Chorismate synthase of Opitutus terrae (strain DSM 11246 / JCM 15787 / PB90-1).